The primary structure comprises 350 residues: Nicotinate-nucleotide--dimethylbenzimidazole phosphoribosyltransferase (350 aa).

E316 functions as the Proton acceptor in the catalytic mechanism.

Belongs to the CobT family.

The catalysed reaction is 5,6-dimethylbenzimidazole + nicotinate beta-D-ribonucleotide = alpha-ribazole 5'-phosphate + nicotinate + H(+). Its pathway is nucleoside biosynthesis; alpha-ribazole biosynthesis; alpha-ribazole from 5,6-dimethylbenzimidazole: step 1/2. Functionally, catalyzes the synthesis of alpha-ribazole-5'-phosphate from nicotinate mononucleotide (NAMN) and 5,6-dimethylbenzimidazole (DMB). This chain is Nicotinate-nucleotide--dimethylbenzimidazole phosphoribosyltransferase, found in Pseudomonas savastanoi pv. phaseolicola (strain 1448A / Race 6) (Pseudomonas syringae pv. phaseolicola (strain 1448A / Race 6)).